A 591-amino-acid polypeptide reads, in one-letter code: Aspartate--tRNA(Asp/Asn) ligase (591 aa).

Glu-175 is a binding site for L-aspartate. The aspartate stretch occupies residues 199–202 (QQFK). Arg-221 and His-453 together coordinate L-aspartate. ATP is bound at residue 221–223 (RDE). Residue Glu-486 participates in ATP binding. Position 493 (Arg-493) interacts with L-aspartate. 538–541 (GIDR) is a binding site for ATP.

Belongs to the class-II aminoacyl-tRNA synthetase family. Type 1 subfamily. Homodimer.

The protein localises to the cytoplasm. It carries out the reaction tRNA(Asx) + L-aspartate + ATP = L-aspartyl-tRNA(Asx) + AMP + diphosphate. Aspartyl-tRNA synthetase with relaxed tRNA specificity since it is able to aspartylate not only its cognate tRNA(Asp) but also tRNA(Asn). Reaction proceeds in two steps: L-aspartate is first activated by ATP to form Asp-AMP and then transferred to the acceptor end of tRNA(Asp/Asn). The protein is Aspartate--tRNA(Asp/Asn) ligase of Roseobacter denitrificans (strain ATCC 33942 / OCh 114) (Erythrobacter sp. (strain OCh 114)).